The sequence spans 1781 residues: Atrochrysone carboxylic acid synthase (1781 aa).

Residues 15-253 (TRDLFRRLHV…KHVALPVYAG (239 aa)) are N-terminal acylcarrier protein transacylase domain (SAT). Residues 390 to 823 (QSKIAIVGMA…GGNTSVVVEE (434 aa)) form the Ketosynthase family 3 (KS3) domain. Catalysis depends on for beta-ketoacyl synthase activity residues Cys-563, His-698, and His-741. A malonyl-CoA:ACP transacylase (MAT) domain region spans residues 925–1244 (FAFTGQGASH…SLGLLHCAGL (320 aa)). The interval 1312-1631 (TSTVQQIIEE…RVLLNRFFSA (320 aa)) is product template (PT) domain. The interval 1316-1451 (QQIIEETFSD…ADIVYGLPTD (136 aa)) is N-terminal hotdog fold. A PKS/mFAS DH domain is found at 1316–1626 (QQIIEETFSD…FRRYPRVLLN (311 aa)). His-1348 acts as the Proton acceptor; for dehydratase activity in catalysis. A C-terminal hotdog fold region spans residues 1478–1626 (IANRLSHNMA…FRRYPRVLLN (149 aa)). Catalysis depends on Asp-1537, which acts as the Proton donor; for dehydratase activity. Positions 1633–1653 (DSDTSKHTSATDVSPPKKVVQ) are disordered. The Carrier domain occupies 1703 to 1780 (VDSDSTASKA…DLKAWLMEYY (78 aa)). Ser-1740 carries the post-translational modification O-(pantetheine 4'-phosphoryl)serine.

It carries out the reaction holo-[ACP] + 8 malonyl-CoA + 8 H(+) = atrochrysone carboxyl-[ACP] + 8 CO2 + 8 CoA + 2 H2O. Its pathway is secondary metabolite biosynthesis. Atrochrysone carboxylic acid synthase; part of the gene cluster that mediates the biosynthesis of the dimeric xanthones cryptosporioptides. The pathway begins with the synthesis of atrochrysone thioester by the polyketide synthase dmx-nrPKS. The atrochrysone carboxyl ACP thioesterase dmxR1 then breaks the thioester bond and releases the atrochrysone carboxylic acid from dmx-nrPKS. Atrochrysone carboxylic acid is decarboxylated by the decarboxylase dmxR15, and oxidized by the anthrone oxygenase dmxR16 to yield emodin. Emodin is then reduced to emodin hydroquinone by the oxidoreductase dmxR7. A-ring reduction by the short chain dehydrogenase dmxR18, dehydration by the scytalone dehydratase-like protein dmxR17 and probable spontaneous re-oxidation, results in overall deoxygenation to chrysophanol. Baeyer-Villiger oxidation by the Baeyer-Villiger monooxygenase (BVMO) dmxR6 then yields monodictylactone in equilibrium with monodictyphenone. In the case of the cryptosporioptides biosynthesis, monodictylactone is reduced at C-12 to an alcohol (by the short chain dehydrogenases dmxR12 or dmxR8) and hydroxylated at C-5 by dmxR9, yielding the electron-rich aromatic which could eliminate H(2)O to form the ortho-quinonemethide, followed by tautomerisation to paraquinone and complete the formal reduction to produce the 10-methylgroup. Conjugate addition of C-4a-OH to the resulting paraquinone by the monooxygenase dmxR10 then gives cyclohexadienone, which is then reduced at C-5 by the short chain dehydrogenase dmxR3 to give the dihydroxanthone. The 6,7-epoxide in the cryptosporioptides could be introduced by the cytochrome P450 monooxygenase dmxL3. The highly reducing PKS dmxL2 manufactures butyrate, which is further carboxylated by dmxL1 to form ethylmalonate. It is not yet clear whether the carboxylation occurs while the butyrate is attached to the ACP of dmxL2, but this unusual fungal metabolite could then be esterified to O-5 by the O-acetyltransferase dmxR13. Finally, dimerization performed by dmxR5 gives the observed dimers cryptosporioptides A, B and C as the final products of the pathway. The sequence is that of Atrochrysone carboxylic acid synthase from Cryptosporiopsis sp. (strain 8999).